The primary structure comprises 1975 residues: Cadherin-87A (1975 aa).

The N-terminal stretch at 1-17 (MKLPLGLLMICLGLTLA) is a signal peptide. Over 18–1775 (KGETNLPPVF…AIVQDEFDLA (1758 aa)) the chain is Extracellular. Cadherin domains are found at residues 28–132 (TQTL…PPEF), 133–245 (QNTP…PPVF), 246–358 (QGSL…PPVF), 359–472 (NHKE…KPVF), 473–669 (EQES…PPVC), 670–774 (ESPL…VPNF), 775–878 (EQQS…DPYF), 879–998 (VPAT…PPRF), 999–1103 (NAPW…DPKF), 1104–1211 (SQSD…APVF), 1212–1318 (TRDV…KPEF), 1319–1431 (VIPA…RPEF), 1432–1553 (PDAS…PPVF), and 1554–1677 (EKPI…PPEE). N-linked (GlcNAc...) asparagine glycosylation is found at N39, N77, and N203. A glycan (N-linked (GlcNAc...) asparagine) is linked at N424. Positions 535–560 (CHDNGESNRRERRDLNEDEHVEEDDG) are disordered. Over residues 537–549 (DNGESNRRERRDL) the composition is skewed to basic and acidic residues. The span at 550–560 (NEDEHVEEDDG) shows a compositional bias: acidic residues. 2 N-linked (GlcNAc...) asparagine glycosylation sites follow: N730 and N761. Residues N1039, N1049, N1111, N1163, N1217, N1325, N1349, N1492, N1576, and N1691 are each glycosylated (N-linked (GlcNAc...) asparagine). Residues 1776–1796 (VAGLVALVIVLFVGVISFIVL) form a helical membrane-spanning segment. At 1797 to 1975 (CCCLKHWNLS…DGDDAVAELI (179 aa)) the chain is on the cytoplasmic side. The segment covering 1887–1899 (YATIQPRNNQNRL) has biased composition (polar residues). The segment at 1887–1916 (YATIQPRNNQNRLTGGGGAGGGSMRSGGGA) is disordered. Gly residues predominate over residues 1900–1916 (TGGGGAGGGSMRSGGGA).

The protein resides in the cell membrane. Functionally, cadherins are calcium-dependent cell adhesion proteins. They preferentially interact with themselves in a homophilic manner in connecting cells. The chain is Cadherin-87A (Cad87A) from Drosophila melanogaster (Fruit fly).